Reading from the N-terminus, the 95-residue chain is Small ribosomal subunit protein uS15 (95 aa).

The protein belongs to the universal ribosomal protein uS15 family. Part of the 30S ribosomal subunit. Forms a bridge to the 50S subunit in the 70S ribosome, contacting the 23S rRNA.

One of the primary rRNA binding proteins, it binds directly to 16S rRNA where it helps nucleate assembly of the platform of the 30S subunit by binding and bridging several RNA helices of the 16S rRNA. Its function is as follows. Forms an intersubunit bridge (bridge B4) with the 23S rRNA of the 50S subunit in the ribosome. This chain is Small ribosomal subunit protein uS15, found in Streptomyces coelicolor (strain ATCC BAA-471 / A3(2) / M145).